The sequence spans 141 residues: MAVQRTFSIIKPDAVAKNVIGKITTRFEEAGLKIVASKIKQLSKAEAEGFYAEHSARGFFGDLVAFMTSGPVVVQVLEGENAIALNRELMGATNPKEAAPGTIRADFAESIDANAVHGSDSEAAAAREIAYFFAATEVTTR.

Positions 11, 59, 87, 93, 104, and 114 each coordinate ATP. His117 acts as the Pros-phosphohistidine intermediate in catalysis.

Belongs to the NDK family. In terms of assembly, homotetramer. The cofactor is Mg(2+).

The protein resides in the cytoplasm. The enzyme catalyses a 2'-deoxyribonucleoside 5'-diphosphate + ATP = a 2'-deoxyribonucleoside 5'-triphosphate + ADP. It catalyses the reaction a ribonucleoside 5'-diphosphate + ATP = a ribonucleoside 5'-triphosphate + ADP. In terms of biological role, major role in the synthesis of nucleoside triphosphates other than ATP. The ATP gamma phosphate is transferred to the NDP beta phosphate via a ping-pong mechanism, using a phosphorylated active-site intermediate. The sequence is that of Nucleoside diphosphate kinase from Pseudomonas entomophila (strain L48).